The sequence spans 237 residues: Phosphoribosylaminoimidazole-succinocarboxamide synthase (237 aa).

It belongs to the SAICAR synthetase family.

The catalysed reaction is 5-amino-1-(5-phospho-D-ribosyl)imidazole-4-carboxylate + L-aspartate + ATP = (2S)-2-[5-amino-1-(5-phospho-beta-D-ribosyl)imidazole-4-carboxamido]succinate + ADP + phosphate + 2 H(+). The protein operates within purine metabolism; IMP biosynthesis via de novo pathway; 5-amino-1-(5-phospho-D-ribosyl)imidazole-4-carboxamide from 5-amino-1-(5-phospho-D-ribosyl)imidazole-4-carboxylate: step 1/2. This Halalkalibacterium halodurans (strain ATCC BAA-125 / DSM 18197 / FERM 7344 / JCM 9153 / C-125) (Bacillus halodurans) protein is Phosphoribosylaminoimidazole-succinocarboxamide synthase.